A 548-amino-acid polypeptide reads, in one-letter code: Glutamate--tRNA ligase (548 aa).

The 'HIGH' region motif lies at 102-112 (PSPSGPLHIGH).

Belongs to the class-I aminoacyl-tRNA synthetase family. Glutamate--tRNA ligase type 2 subfamily.

It is found in the cytoplasm. It catalyses the reaction tRNA(Glu) + L-glutamate + ATP = L-glutamyl-tRNA(Glu) + AMP + diphosphate. Catalyzes the attachment of glutamate to tRNA(Glu) in a two-step reaction: glutamate is first activated by ATP to form Glu-AMP and then transferred to the acceptor end of tRNA(Glu). The protein is Glutamate--tRNA ligase of Thermoplasma volcanium (strain ATCC 51530 / DSM 4299 / JCM 9571 / NBRC 15438 / GSS1).